We begin with the raw amino-acid sequence, 350 residues long: N(4)-bis(aminopropyl)spermidine synthase (350 aa).

It belongs to the branched-chain polyamine synthase family.

The protein localises to the cytoplasm. It catalyses the reaction 2 S-adenosyl 3-(methylsulfanyl)propylamine + spermidine = N(4)-bis(aminopropyl)spermidine + 2 S-methyl-5'-thioadenosine + 2 H(+). It functions in the pathway amine and polyamine biosynthesis. Involved in the biosynthesis of branched-chain polyamines, which support the growth of thermophiles under high-temperature conditions. Catalyzes the sequential condensation of spermidine with the aminopropyl groups of decarboxylated S-adenosylmethionines to produce N(4)-bis(aminopropyl)spermidine via N(4)-aminopropylspermidine. In Methanocaldococcus jannaschii (strain ATCC 43067 / DSM 2661 / JAL-1 / JCM 10045 / NBRC 100440) (Methanococcus jannaschii), this protein is N(4)-bis(aminopropyl)spermidine synthase.